Consider the following 218-residue polypeptide: ATP-dependent dethiobiotin synthetase BioD (218 aa).

9 to 15 contacts ATP; sequence TNAGKTT. Thr14 lines the Mg(2+) pocket. Lys35 is a catalytic residue. Residue Lys35 coordinates phosphate. Thr39 lines the substrate pocket. ATP-binding positions include Asp50, Glu116, and 116–119; that span reads EGAG. Asp50 and Glu116 together coordinate Mg(2+). 116–119 contacts phosphate; that stretch reads EGAG. 151–154 contributes to the substrate binding site; it reads GLIN. ATP-binding positions include Asn175 and 175–177; that span reads NLK.

The protein belongs to the dethiobiotin synthetase family. Homodimer. The cofactor is Mg(2+).

The protein localises to the cytoplasm. It carries out the reaction (7R,8S)-7,8-diammoniononanoate + CO2 + ATP = (4R,5S)-dethiobiotin + ADP + phosphate + 3 H(+). It functions in the pathway cofactor biosynthesis; biotin biosynthesis; biotin from 7,8-diaminononanoate: step 1/2. Its function is as follows. Catalyzes a mechanistically unusual reaction, the ATP-dependent insertion of CO2 between the N7 and N8 nitrogen atoms of 7,8-diaminopelargonic acid (DAPA, also called 7,8-diammoniononanoate) to form a ureido ring. The protein is ATP-dependent dethiobiotin synthetase BioD of Helicobacter pylori (strain ATCC 700392 / 26695) (Campylobacter pylori).